A 351-amino-acid chain; its full sequence is MVNTLPKPGIKTPSKETVLTPRFYTTDFETAANLDLSAQENELQAMLAEMRADYNRHHFVRDEAFEQSWEHIDGEARQAFIEYLERSCISEFSGFLLFKELSRKLKNRSPVLAEMFQLMARDEARHAGFLNKAMGDFKLSLDLATVTKTRTYTFFPIEWVLYTVYLSEKIGYWRYIIIFRHLEKHPENQFYPIFRYFESWCQDENRHGDIFKALLRSQPQLWNNWKARLWSRFFLLSVFATHTLTVHERSGFYKSLGLDATDFDLQVVRNTNETAGRAFPVMLNTEHPKFFPLLQRCAGYNLNISEIERSSQPKFVKLIRKLPLIAAIVWNLLMVYLIKPIDTEALRETVR.

It belongs to the AcsF family. It depends on Fe cation as a cofactor.

The enzyme catalyses Mg-protoporphyrin IX 13-monomethyl ester + 3 NADPH + 3 O2 + 2 H(+) = 3,8-divinyl protochlorophyllide a + 3 NADP(+) + 5 H2O. It functions in the pathway porphyrin-containing compound metabolism; chlorophyll biosynthesis (light-independent). Its function is as follows. Catalyzes the formation of the isocyclic ring in chlorophyll biosynthesis. Mediates the cyclase reaction, which results in the formation of divinylprotochlorophyllide (Pchlide) characteristic of all chlorophylls from magnesium-protoporphyrin IX 13-monomethyl ester (MgPMME). In Nostoc sp. (strain PCC 7120 / SAG 25.82 / UTEX 2576), this protein is Magnesium-protoporphyrin IX monomethyl ester [oxidative] cyclase 1.